Here is a 1429-residue protein sequence, read N- to C-terminus: Inactive rhomboid protein 1 (1429 aa).

3 disordered regions span residues 1–36 (MSSNGSDLGHNNRRNEKGNPDSVHSSMRGSMSSTRR), 560–579 (GNEDAGQSNGTNGNYAPDRP), and 740–766 (TSALNSGGNATSDINLTGDQSSHQPGA). Over 1–843 (MSSNGSDLGH…RPFFTYWINT (843 aa)) the chain is Cytoplasmic. Residues 22-33 (SVHSSMRGSMSS) are compositionally biased toward low complexity. 2 stretches are compositionally biased toward polar residues: residues 564–573 (AGQSNGTNGN) and 740–763 (TSALNSGGNATSDINLTGDQSSHQ). A helical membrane pass occupies residues 844–864 (VQVVVLILSIICYGIAPIGIG). Residues 865–1099 (SEQKTGQVLV…PDQLYRLLTS (235 aa)) lie on the Lumenal side of the membrane. The chain crosses the membrane as a helical span at residues 1100–1120 (LCMHAGILHLAITLIFQHLFL). Over 1121–1131 (ADLERLIGTVR) the chain is Cytoplasmic. The helical transmembrane segment at 1132-1152 (TAIVYIMSGFAGNLTSAILVP) threads the bilayer. The Lumenal segment spans residues 1153-1156 (HRPE). The chain crosses the membrane as a helical span at residues 1157-1177 (VGPSASLSGVVASLIALLVWM). Over 1178–1186 (HWKYLHKPH) the chain is Cytoplasmic. Residues 1187–1207 (IALFKLLLLCSVLVGIGTLPY) form a helical membrane-spanning segment. Residues 1208 to 1210 (QLN) lie on the Lumenal side of the membrane. The helical transmembrane segment at 1211–1231 (FLGLLAGVICGCLLTMSLVPF) threads the bilayer. The Cytoplasmic portion of the chain corresponds to 1232–1245 (TTFSKYGRKKKINL). Residues 1246–1266 (IWTCVLFHVVVYTAMIVTFYI) traverse the membrane as a helical segment. Topologically, residues 1267 to 1429 (HPSEFHSISF…INNNTEFNVL (163 aa)) are lumenal.

Belongs to the peptidase S54 family. Specifically expressed in the nervous system and in brain.

Its subcellular location is the endoplasmic reticulum membrane. Functionally, rhomboid protease-like protein which has no protease activity but regulates the secretion of several ligands of the epidermal growth factor receptor. Indirectly activates the epidermal growth factor receptor signaling pathway and may thereby regulate sleep, cell survival, proliferation and migration. The sequence is that of Inactive rhomboid protein 1 (rho-5) from Drosophila melanogaster (Fruit fly).